The sequence spans 337 residues: Adenosine deaminase (337 aa).

Zn(2+)-binding residues include H12 and H14. The substrate site is built by H14, D16, and G170. H197 contributes to the Zn(2+) binding site. Residue E200 is the Proton donor of the active site. D278 contacts Zn(2+). Residue D279 participates in substrate binding.

Belongs to the metallo-dependent hydrolases superfamily. Adenosine and AMP deaminases family. Adenosine deaminase subfamily. It depends on Zn(2+) as a cofactor.

The enzyme catalyses adenosine + H2O + H(+) = inosine + NH4(+). It catalyses the reaction 2'-deoxyadenosine + H2O + H(+) = 2'-deoxyinosine + NH4(+). In terms of biological role, catalyzes the hydrolytic deamination of adenosine and 2-deoxyadenosine. The protein is Adenosine deaminase of Pectobacterium atrosepticum (strain SCRI 1043 / ATCC BAA-672) (Erwinia carotovora subsp. atroseptica).